Reading from the N-terminus, the 270-residue chain is Formamidopyrimidine-DNA glycosylase (270 aa).

Catalysis depends on Pro-2, which acts as the Schiff-base intermediate with DNA. Glu-3 acts as the Proton donor in catalysis. Lys-58 functions as the Proton donor; for beta-elimination activity in the catalytic mechanism. DNA-binding residues include His-90, Arg-109, and Arg-152. The FPG-type zinc finger occupies 237–270 (RVYGREGEPCQCGGVVKRIVQGGRSTFFCPRCQK). The Proton donor; for delta-elimination activity role is filled by Arg-260.

It belongs to the FPG family. As to quaternary structure, monomer. Requires Zn(2+) as cofactor.

It catalyses the reaction Hydrolysis of DNA containing ring-opened 7-methylguanine residues, releasing 2,6-diamino-4-hydroxy-5-(N-methyl)formamidopyrimidine.. The enzyme catalyses 2'-deoxyribonucleotide-(2'-deoxyribose 5'-phosphate)-2'-deoxyribonucleotide-DNA = a 3'-end 2'-deoxyribonucleotide-(2,3-dehydro-2,3-deoxyribose 5'-phosphate)-DNA + a 5'-end 5'-phospho-2'-deoxyribonucleoside-DNA + H(+). Involved in base excision repair of DNA damaged by oxidation or by mutagenic agents. Acts as a DNA glycosylase that recognizes and removes damaged bases. Has a preference for oxidized purines, such as 7,8-dihydro-8-oxoguanine (8-oxoG). Has AP (apurinic/apyrimidinic) lyase activity and introduces nicks in the DNA strand. Cleaves the DNA backbone by beta-delta elimination to generate a single-strand break at the site of the removed base with both 3'- and 5'-phosphates. This Novosphingobium aromaticivorans (strain ATCC 700278 / DSM 12444 / CCUG 56034 / CIP 105152 / NBRC 16084 / F199) protein is Formamidopyrimidine-DNA glycosylase.